The primary structure comprises 628 residues: MSDWSIGLARQVWSVQHWSGGYFDISDEGRVVARPDRDPARAPLDLAGIAAEARHQGLGLPVLVRFLDILHDRVDSLCQAFRQAMVEDGYRGGYRAVYPIKVNQQRRVVEEIIRHGNGRVGLEAGSKPELMAVLALTPPGGTVVCNGYKDREYVRLALRGRQLGLQVHLVIEKASELELVLEEAAALGVTPSLGMRVRLATIGAGKWQNTGGEKSKFGLTAAQALAVVDRLRAAGCLDWLRLLHFHLGSQIPNIRDIRRGMREAARYYAELRALGAPVETVDVGGGLGVDYEGSRSRSFCSMNYTVAEYAHNVVHALWQVCEDEGLPHPDIITESGRAMTAHHAVLITDVIDGDRVPGGADLLAPADAAPRVLHELWTVWTGLDRRHPLEAYHDAAHGLAEAQELYAHGVLNLTDRARAERIWQAVCHALLQRLDPRRRPHRELLDELNEKLADKLFCNFSLFQSMPDVWAIDQIFPVLPLQRLDEPPASRAVLQDLTCDSDGCIRGYVDRDGVESTLPLPPWRPGEPYLLGIFLVGAYQEILGDMHNLFGDTHSVNVRLTGEGYALSGAAHGDTITDVLRYVDFDAEVLRGIYRERVVAAAGLDATARAQCLADLEAGLRGYTYLDT.

The residue at position 101 (Lys101) is an N6-(pyridoxal phosphate)lysine. 281 to 291 (VDVGGGLGVDY) contacts substrate.

This sequence belongs to the Orn/Lys/Arg decarboxylase class-II family. SpeA subfamily. Mg(2+) is required as a cofactor. It depends on pyridoxal 5'-phosphate as a cofactor.

The catalysed reaction is L-arginine + H(+) = agmatine + CO2. It participates in amine and polyamine biosynthesis; agmatine biosynthesis; agmatine from L-arginine: step 1/1. In terms of biological role, catalyzes the biosynthesis of agmatine from arginine. The protein is Biosynthetic arginine decarboxylase of Alkalilimnicola ehrlichii (strain ATCC BAA-1101 / DSM 17681 / MLHE-1).